Consider the following 694-residue polypeptide: Voltage-gated chloride channel TMC4 (694 aa).

Positions 1–21 (MEAWGQSPACSSSRKARTGPS) are disordered. Topologically, residues 1-150 (MEAWGQSPAC…GTESYFSLLR (150 aa)) are extracellular. Residues 151–171 (FLLFLNLVASVIEICMKLIPT) form a helical membrane-spanning segment. Over 172 to 231 (WLEGAPPGPPGPNISSPCGSYIPHTHGLVAFPTQLFNLLSGEGYLEWSPLFYGFYPPRSN) the chain is Cytoplasmic. The helical transmembrane segment at 232–252 (LAITYLCSVFAISVIYLLCIL) threads the bilayer. The Extracellular portion of the chain corresponds to 253 to 330 (RRSVSGLKET…SQRAKVWSMR (78 aa)). Residues 331-351 (ALLNVLVLALLGAAFYGIYWA) traverse the membrane as a helical segment. Over 352–376 (TEYTLTLQETPLVRQTPLFKLLVDY) the chain is Cytoplasmic. The chain crosses the membrane as a helical span at residues 377–397 (LPSIFISLFNFVLPPVFKFIA). Residues 398–407 (SLEGYTQSRQ) are Extracellular-facing. A helical membrane pass occupies residues 408-428 (IVLILLRTVFLRLASLVFLLV). Over 429 to 465 (SLWSQITCGGNMEAEGCKACGYNYKEIPCWETRLGQE) the chain is Cytoplasmic. The helical transmembrane segment at 466–486 (MYKLVLFDLLMGLLVTLLVQF) threads the bilayer. The Extracellular portion of the chain corresponds to 487–513 (PRKILCGLCPGALGRLSGTLEFQVPDE). The chain crosses the membrane as a helical span at residues 514-534 (VLGLIYAQTVVWVGSFFCPLL). Residue P535 is a topological domain, cytoplasmic. A helical membrane pass occupies residues 536–556 (LINTAKFLILFCLKKITLFSI). Residues 557–574 (YSPASRTFRASTANFFFP) lie on the Extracellular side of the membrane. Residues 575-595 (LVLLVGLAISAVPVLYSIFLI) traverse the membrane as a helical segment. The Cytoplasmic portion of the chain corresponds to 596–635 (PPSKLCGPFRGKLSIWAQIPEAIESLPQTAQNFLYFLGTQ). Residues 636–656 (AFTVPLLILSSILMMYTVALA) traverse the membrane as a helical segment. Residues 657–694 (NCYGRLISELKRQIETEVQNKVFLAQRAVALSSRNGTS) are Extracellular-facing. Residue N691 is glycosylated (N-linked (GlcNAc...) asparagine).

Belongs to the TMC family. As to expression, expressed in taste bud cells of the posterior tongue. Ubiquitously expressed.

The protein localises to the membrane. It carries out the reaction chloride(in) = chloride(out). Functionally, voltage-gated chloride channel involved in high-concentration salt taste sensation. Depolarization induced by high NaCl concentration may trigger the activation of TMC4-mediated chloride influx into taste bud cells, helping the return to resting potential. Also allows permeation of organic anions including gluconate, but their current amplitudes at positive potentials are less than that of chloride. Involved in pH and temperature-dependent modulation of salty taste. The chain is Voltage-gated chloride channel TMC4 from Mus musculus (Mouse).